The primary structure comprises 421 residues: UDP-N-acetylglucosamine 1-carboxyvinyltransferase 1 (421 aa).

Residue 22–23 (KN) coordinates phosphoenolpyruvate. A UDP-N-acetyl-alpha-D-glucosamine-binding site is contributed by Arg95. The active-site Proton donor is the Cys119. The residue at position 119 (Cys119) is a 2-(S-cysteinyl)pyruvic acid O-phosphothioketal. Residues 124–128 (RPIEQ), Asp308, and Val330 each bind UDP-N-acetyl-alpha-D-glucosamine.

The protein belongs to the EPSP synthase family. MurA subfamily.

It localises to the cytoplasm. The catalysed reaction is phosphoenolpyruvate + UDP-N-acetyl-alpha-D-glucosamine = UDP-N-acetyl-3-O-(1-carboxyvinyl)-alpha-D-glucosamine + phosphate. The protein operates within cell wall biogenesis; peptidoglycan biosynthesis. Cell wall formation. Adds enolpyruvyl to UDP-N-acetylglucosamine. The chain is UDP-N-acetylglucosamine 1-carboxyvinyltransferase 1 from Staphylococcus aureus (strain MW2).